Here is a 141-residue protein sequence, read N- to C-terminus: Large ribosomal subunit protein uL11 (141 aa).

This sequence belongs to the universal ribosomal protein uL11 family. Part of the ribosomal stalk of the 50S ribosomal subunit. Interacts with L10 and the large rRNA to form the base of the stalk. L10 forms an elongated spine to which L12 dimers bind in a sequential fashion forming a multimeric L10(L12)X complex. Post-translationally, one or more lysine residues are methylated.

Forms part of the ribosomal stalk which helps the ribosome interact with GTP-bound translation factors. The protein is Large ribosomal subunit protein uL11 of Lactococcus lactis subsp. lactis (strain IL1403) (Streptococcus lactis).